Reading from the N-terminus, the 373-residue chain is Peroxisomal biogenesis factor 3 (373 aa).

Residues 1 to 15 (MLRSMWNFLKRHKKK) are Cytoplasmic-facing. A targeting to peroxisomes region spans residues 1 to 45 (MLRSMWNFLKRHKKKCIFLGTVLGGVYILGKYGQKKIREIQEREA). Residues 16–36 (CIFLGTVLGGVYILGKYGQKK) form a helical membrane-spanning segment. Residues 37–116 (IREIQEREAA…LKIISFTRSI (80 aa)) lie on the Peroxisomal side of the membrane. The helical transmembrane segment at 117–140 (VAVYSTCMLVVLLRVQLNIIGGYI) threads the bilayer. The tract at residues 120–136 (YSTCMLVVLLRVQLNII) is interaction with PEX19. The Cytoplasmic portion of the chain corresponds to 141-373 (YLDNATVGKN…AFSTPQQLEK (233 aa)).

Belongs to the peroxin-3 family. Interacts with PEX19.

The protein localises to the peroxisome membrane. Functionally, involved in peroxisome biosynthesis and integrity. Assembles membrane vesicles before the matrix proteins are translocated. As a docking factor for PEX19, is necessary for the import of peroxisomal membrane proteins in the peroxisomes. The chain is Peroxisomal biogenesis factor 3 (PEX3) from Cricetulus longicaudatus (Long-tailed dwarf hamster).